A 310-amino-acid chain; its full sequence is UDP-N-acetylenolpyruvoylglucosamine reductase (310 aa).

Residues 23–188 enclose the FAD-binding PCMH-type domain; the sequence is KVGGNAEIFF…LKAVFKVNKG (166 aa). Arg-168 is a catalytic residue. Catalysis depends on Ser-217, which acts as the Proton donor. Glu-287 is an active-site residue.

It belongs to the MurB family. FAD serves as cofactor.

It is found in the cytoplasm. The enzyme catalyses UDP-N-acetyl-alpha-D-muramate + NADP(+) = UDP-N-acetyl-3-O-(1-carboxyvinyl)-alpha-D-glucosamine + NADPH + H(+). Its pathway is cell wall biogenesis; peptidoglycan biosynthesis. Cell wall formation. The sequence is that of UDP-N-acetylenolpyruvoylglucosamine reductase from Rickettsia bellii (strain OSU 85-389).